The following is a 56-amino-acid chain: Large ribosomal subunit protein bL32 (56 aa).

Residues 1-16 (MAVQKNRKTRSKRGMR) show a composition bias toward basic residues. Residues 1–28 (MAVQKNRKTRSKRGMRRSHDALTTAALS) are disordered.

It belongs to the bacterial ribosomal protein bL32 family.

This is Large ribosomal subunit protein bL32 from Vibrio campbellii (strain ATCC BAA-1116).